The following is a 337-amino-acid chain: Glycerol-3-phosphate dehydrogenase [NAD(P)+] (337 aa).

Ser-17, Tyr-18, His-38, and Lys-112 together coordinate NADPH. The sn-glycerol 3-phosphate site is built by Lys-112, Gly-141, and Thr-143. Residue Ala-145 participates in NADPH binding. 5 residues coordinate sn-glycerol 3-phosphate: Lys-197, Asp-250, Ser-260, Arg-261, and Asn-262. Lys-197 acts as the Proton acceptor in catalysis. Arg-261 serves as a coordination point for NADPH. Residues Val-285 and Glu-287 each contribute to the NADPH site.

Belongs to the NAD-dependent glycerol-3-phosphate dehydrogenase family.

The protein resides in the cytoplasm. It catalyses the reaction sn-glycerol 3-phosphate + NAD(+) = dihydroxyacetone phosphate + NADH + H(+). It carries out the reaction sn-glycerol 3-phosphate + NADP(+) = dihydroxyacetone phosphate + NADPH + H(+). The protein operates within membrane lipid metabolism; glycerophospholipid metabolism. Its function is as follows. Catalyzes the reduction of the glycolytic intermediate dihydroxyacetone phosphate (DHAP) to sn-glycerol 3-phosphate (G3P), the key precursor for phospholipid synthesis. The protein is Glycerol-3-phosphate dehydrogenase [NAD(P)+] of Pasteurella multocida (strain Pm70).